The primary structure comprises 446 residues: MNAVEQAMEYIKTNNVKFIRFQFVDIHGEPKNIAYPVKAGAAGEEELYDVLEKGVYFDGSSIEGFVSIESSDMMLKPDLKTLSVLPWRPTEKSVARVICDVYTTNGKPFEGDPRGCLKRVLAKFDEELGGEFFVGPEPEFFILKEDACGSWVPADDAGYFDLEPLDGGCDIRRKIVFALENLGFHVEASHHEVAEGQHEVDFKFADAVKTADSVVTFKTTIKTLAAQDGLKATFMPKPFFGINGSGMHCHQSIWLNGEPSFYDESAQYQLSETCMSYVAGILDHAKSIVAVTNPTVNSYKRLVPGYEAPVNIAWANSNRSAIVRVPAPRGKGTRIEFRAPDPACNPYLAFTVMLAAGLDGVKRKLSAIEPVEKNIFAMSEAQKKAEGIESVPANLKAALDELENNSVLKDALGKHIFENFIEIKNAEWDSFRTAVTDWETKQYLKI.

The 93-residue stretch at 14 to 106 folds into the GS beta-grasp domain; it reads NNVKFIRFQF…VICDVYTTNG (93 aa). Positions 113 to 446 constitute a GS catalytic domain; that stretch reads PRGCLKRVLA…DWETKQYLKI (334 aa). Mg(2+)-binding residues include glutamate 137 and glutamate 139. Residue glutamate 187 coordinates ATP. Residues glutamate 192 and glutamate 199 each coordinate Mg(2+). L-glutamate-binding positions include 243–244 and glycine 244; that span reads NG. Histidine 248 provides a ligand contact to Mg(2+). Residues 250–252 and serine 252 each bind ATP; that span reads HQS. 3 residues coordinate L-glutamate: arginine 301, glutamate 307, and arginine 319. Residues arginine 319, arginine 324, and lysine 331 each contribute to the ATP site. Glutamate 336 contributes to the Mg(2+) binding site. Residue arginine 338 participates in L-glutamate binding.

This sequence belongs to the glutamine synthetase family. Oligomer of 12 subunits arranged in the form of two hexagons. The cofactor is Mg(2+).

The protein localises to the cytoplasm. It catalyses the reaction L-glutamate + NH4(+) + ATP = L-glutamine + ADP + phosphate + H(+). Probably involved in nitrogen metabolism via ammonium assimilation. Catalyzes the ATP-dependent biosynthesis of glutamine from glutamate and ammonia. This chain is Glutamine synthetase, found in Methanococcus maripaludis (strain DSM 14266 / JCM 13030 / NBRC 101832 / S2 / LL).